The chain runs to 212 residues: Putative DNA-binding protein At1g48610 (212 aa).

The interval 1 to 130 (MAKTALTPPA…GRPKKDDVAA (130 aa)) is disordered. Residues 27 to 44 (NKPQTDATGVSATDTASQ) are compositionally biased toward polar residues. 3 consecutive DNA-binding regions (a.T hook) follow at residues 45–56 (KRGRGRPPKAKS), 70–79 (TKPSGRPKRN), and 94–98 (KKRGR). Residues 57 to 72 (DSSQIGAVSAKASTKP) show a composition bias toward polar residues. Residues 103–113 (TVTAAVVTTAT) are compositionally biased toward low complexity. A DNA-binding region (a.T hook 4) is located at residues 118–127 (RKRGRPKKDD). A coiled-coil region spans residues 176-210 (DLKKRTALLQKKVKEAAAKLKQAVTAIDEVQKLAD).

Its subcellular location is the nucleus. May bind DNA. This is Putative DNA-binding protein At1g48610 from Arabidopsis thaliana (Mouse-ear cress).